Here is a 555-residue protein sequence, read N- to C-terminus: MPLELTQSRVQKIWVPVDHRPSLPRSCGPKLTNSPTVIVMVGLPARGKTYISKKLTRYLNWIGVPTKVFNVGEYRREAVKQYSSYNFFRPDNEEAMRVRKQCALAALRDVKSYLTKEGGQIAVFDATNTTRERRHMILHFAKENDFKAFFIESVCDDPTVVASNIMEVKISSPDYKDCNSAEAMDDFMKRINCYEASYQPLDPDKCDRDLSFIKVIDVGRRFLVNRVQDHIQSRIVYYLMNIHVQPRTIYLCRHGENEYNVQGKIGGDSGLSSRGKKFANALSKFVEEQNLKDLRVWTSQLKSTIQTAEALRLPYEQWKALNEIDAGVCEELTYEEIRDTYPEEYALREQDKYYYRYPTGESYQDLVQRLEPVIMELERQENVLVICHQAVLRCLLAYFLDKSAEEMPYLKCPLHTVLKLTPVAYGCRVESIYLNVESVSTHRERSEAVKIQHFASVVRPSSYTELDFLSVESAKQDAKKGPNPLMRRNSVTPLASPEPTKKPRINSFEEHVASTSAALPSCLPPEVPTQLPGQPLLGKACLRTVCHIFSKFSPY.

Residues 1-245 are 6-phosphofructo-2-kinase; it reads MPLELTQSRV…VYYLMNIHVQ (245 aa). 42–50 serves as a coordination point for ATP; it reads GLPARGKTY. Positions 75 and 99 each coordinate beta-D-fructose 6-phosphate. Asp-125 is an active-site residue. The beta-D-fructose 6-phosphate site is built by Thr-127 and Arg-133. Cys-155 is an active-site residue. 164-169 is an ATP binding site; the sequence is NIMEVK. Residues Lys-169, Arg-190, and Tyr-194 each coordinate beta-D-fructose 6-phosphate. The segment at 246-555 is fructose-2,6-bisphosphatase; the sequence is PRTIYLCRHG…CHIFSKFSPY (310 aa). Position 253 (Arg-253) interacts with beta-D-fructose 2,6-bisphosphate. His-254 functions as the Tele-phosphohistidine intermediate in the catalytic mechanism. Residues Asn-260 and Gly-266 each contribute to the beta-D-fructose 2,6-bisphosphate site. Residue Glu-323 is the Proton donor/acceptor of the active site. Beta-D-fructose 2,6-bisphosphate-binding residues include Tyr-334, Arg-348, Lys-352, Tyr-363, Gln-389, and Arg-393. 345 to 348 is a binding site for ATP; it reads YALR. Residues 389–393 and Tyr-425 each bind ATP; that span reads QAVLR. The interval 475-504 is disordered; sequence KQDAKKGPNPLMRRNSVTPLASPEPTKKPR. At Ser-490 the chain carries Phosphoserine; by AMPK and PKA. Thr-492 is subject to Phosphothreonine. Ser-496 bears the Phosphoserine mark.

It in the C-terminal section; belongs to the phosphoglycerate mutase family. Homodimer. Forms a heterodimer with PFKFB2. Post-translationally, phosphorylation by AMPK stimulates activity.

The catalysed reaction is beta-D-fructose 2,6-bisphosphate + H2O = beta-D-fructose 6-phosphate + phosphate. It carries out the reaction beta-D-fructose 6-phosphate + ATP = beta-D-fructose 2,6-bisphosphate + ADP + H(+). In terms of biological role, catalyzes both the synthesis and degradation of fructose 2,6-bisphosphate. The protein is 6-phosphofructo-2-kinase/fructose-2,6-bisphosphatase 3 (Pfkfb3) of Rattus norvegicus (Rat).